Here is a 234-residue protein sequence, read N- to C-terminus: 2-hydroxy-3-keto-5-methylthiopentenyl-1-phosphate phosphatase (234 aa).

Belongs to the HAD-like hydrolase superfamily. MtnX family.

The enzyme catalyses 2-hydroxy-5-methylsulfanyl-3-oxopent-1-enyl phosphate + H2O = 1,2-dihydroxy-5-(methylsulfanyl)pent-1-en-3-one + phosphate. It functions in the pathway amino-acid biosynthesis; L-methionine biosynthesis via salvage pathway; L-methionine from S-methyl-5-thio-alpha-D-ribose 1-phosphate: step 4/6. In terms of biological role, dephosphorylates 2-hydroxy-3-keto-5-methylthiopentenyl-1-phosphate (HK-MTPenyl-1-P) yielding 1,2-dihydroxy-3-keto-5-methylthiopentene (DHK-MTPene). The chain is 2-hydroxy-3-keto-5-methylthiopentenyl-1-phosphate phosphatase from Bacillus velezensis (strain DSM 23117 / BGSC 10A6 / LMG 26770 / FZB42) (Bacillus amyloliquefaciens subsp. plantarum).